A 186-amino-acid polypeptide reads, in one-letter code: Ion-translocating oxidoreductase complex subunit B (186 aa).

The hydrophobic stretch occupies residues 1–23 (MLTPILALTALALIAGALLGFAA). Positions 29–88 (EGNPIADQVDAVLPQTQCGQCGFGGCRPYAEAIAAGEAEINRCPPGGQDTVQTLADLLGV) constitute a 4Fe-4S domain. [4Fe-4S] cluster-binding residues include Cys-46, Cys-49, Cys-54, Cys-71, Cys-114, Cys-117, Cys-120, Cys-124, Cys-144, Cys-147, Cys-150, and Cys-154. 2 consecutive 4Fe-4S ferredoxin-type domains span residues 105 to 134 (QVAWVDEAVCIGCTRCIQACPVDAILGAAK) and 135 to 164 (QMHTVLKGECTGCGLCVDPCPVDCIHMVPV).

It belongs to the 4Fe4S bacterial-type ferredoxin family. RnfB subfamily. The complex is composed of six subunits: RnfA, RnfB, RnfC, RnfD, RnfE and RnfG. [4Fe-4S] cluster is required as a cofactor.

It localises to the cell inner membrane. Its function is as follows. Part of a membrane-bound complex that couples electron transfer with translocation of ions across the membrane. This Alkalilimnicola ehrlichii (strain ATCC BAA-1101 / DSM 17681 / MLHE-1) protein is Ion-translocating oxidoreductase complex subunit B.